Here is a 354-residue protein sequence, read N- to C-terminus: MSLRGSLSRLLQTRVHSILKKSVHSVAVIGAPFSQGQKRKGVEHGPAAIREAGLMKRLSSLGCHLKDFGDLSFTPVPKDDLYNNLIVNPRSVGLANQELAEVVSRAVSDGYSCVTLGGDHSLAIGTISGHARHCPDLCVVWVDAHADINTPLTTSSGNLHGQPVSFLLRELQDKVPQLPGFSWIKPCISSASIVYIGLRDVDPPEHFILKNYDIQYFSMRDIDRLGIQKVMERTFDLLIGKRQRPIHLSFDIDAFDPTLAPATGTPVVGGLTYREGMYIAEEIHNTGLLSALDLVEVNPQLATSEEEAKTTANLAVDVIASSFGQTREGGHIVYDQLPTPSSPDESENQARVRI.

A mitochondrion-targeting transit peptide spans 1–22; the sequence is MSLRGSLSRLLQTRVHSILKKS. His-120, Asp-143, His-145, and Asp-147 together coordinate Mn(2+). Residues 145–149, 156–158, and Asp-202 each bind substrate; these read HADIN and SGN. Positions 251 and 253 each coordinate Mn(2+). Positions 265 and 296 each coordinate substrate. Positions 334-354 are disordered; sequence YDQLPTPSSPDESENQARVRI.

Belongs to the arginase family. In terms of assembly, homotrimer. The cofactor is Mn(2+). In terms of tissue distribution, expressed most strongly in kidney and prostate, much less strongly in the brain, skeletal muscle, placenta, lung, mammary gland, macrophage, uterus, testis and gut, but apparently not in the liver, heart and pancreas. Expressed in activated T cells.

The protein resides in the mitochondrion. It catalyses the reaction L-arginine + H2O = urea + L-ornithine. It participates in nitrogen metabolism; urea cycle; L-ornithine and urea from L-arginine: step 1/1. Its function is as follows. May play a role in the regulation of extra-urea cycle arginine metabolism and also in down-regulation of nitric oxide synthesis. Extrahepatic arginase functions to regulate L-arginine bioavailability to nitric oxid synthase (NOS). Arginine metabolism is a critical regulator of innate and adaptive immune responses. Seems to be involved in negative regulation of the survival capacity of activated CD4(+) and CD8(+) T cells. May suppress inflammation-related signaling in asthmatic airway epithelium. May contribute to the immune evasion of H.pylori by restricting M1 macrophage activation and polyamine metabolism. In fetal dendritic cells may play a role in promoting immune suppression and T cell TNF-alpha production during gestation. Regulates RPS6KB1 signaling, which promotes endothelial cell senescence and inflammation and implicates NOS3/eNOS dysfunction. Can inhibit endothelial autophagy independently of its enzymatic activity implicating mTORC2 signaling. Involved in vascular smooth muscle cell senescence and apoptosis independently of its enzymatic activity. Since NOS is found in the penile corpus cavernosum smooth muscle, the clitoral corpus cavernosum and the vagina, arginase-2 plays a role in both male and female sexual arousal. This chain is Arginase-2, mitochondrial (ARG2), found in Homo sapiens (Human).